A 756-amino-acid polypeptide reads, in one-letter code: MFIQRTFLKVLTLLSIVTVLVHGQTQPKDKITLKAVIYDQHKFYNPNFQPKNEGEFVLTKGIVKSDIDQEKRIPVLNSMDANDSINKKARISWPDGFKYFFVDNQAGDSKSAKSGKNLPIQRDIELNWNGEAYEYSNSNYFPINGQGFNDVSYPVPRGYVPISGESWTSMSTSTSLKGNNYNFCLKLNSKFTYNGNEVFKFTGDDDVWVYINNKLVVDIGGIHSQVSASVDVTKLGLTVGTIYNFDFFYCERKTSESNIKIQTTIETYCAYVDYCGVCEGDGSTCCNPATTCNDGKRCTNDFCPDPKSPLAGKDISKYCDHIPVKTCSSKDTLCKQYTCSDDLKGDMCVIKNTVTCPGNQTNCEASGYCDDKFGCINPSKCTDYIGQCFSGKCVNGECAKVTADDCEKIIGGVCRSDYVCEPGLGCKSSERCRQGSDICDLVTCDPKATDESKRCITTVLTDEECRCCEYDTLRFCEQAACSNKTGLCQPIPKNVDDGNLCTIDACNEDEKTITHVQVTCGGCETCSYATGKCEPDSSLCNDNNICTIDICVHEGILDGLPQGNCSNTPVDCGANDEDKCKTWSCDPTKGGCQSTPVVCEDKGKCLVGTCQPSTGQCEYSDRVCDNGGAFCVIGQCDQRLGCLVFDRVCSSDNSRCEEGVCVNGTESEEGHCKSVKYDPLPFNCNTGAVVSTAVIAGSTVAGAVALGIFLYGGKKGYDYWKDSRNISMGSSNSNPLYEEQQTGRGVNPMYDDPAAN.

Positions 1-23 (MFIQRTFLKVLTLLSIVTVLVHG) are cleaved as a signal peptide. The Extracellular portion of the chain corresponds to 24–692 (QTQPKDKITL…NCNTGAVVST (669 aa)). The N-linked (GlcNAc...) asparagine glycan is linked to N82. Positions 126–281 (LNWNGEAYEY…VDYCGVCEGD (156 aa)) constitute a PA14 domain. N-linked (GlcNAc...) asparagine glycans are attached at residues N359, N483, N564, and N663. The chain crosses the membrane as a helical span at residues 693 to 713 (AVIAGSTVAGAVALGIFLYGG). At 714–756 (KKGYDYWKDSRNISMGSSNSNPLYEEQQTGRGVNPMYDDPAAN) the chain is on the cytoplasmic side. Residues 730–744 (SSNSNPLYEEQQTGR) show a composition bias toward polar residues. The interval 730–756 (SSNSNPLYEEQQTGRGVNPMYDDPAAN) is disordered.

The protein belongs to the prespore-cell-inducing factor family.

The protein resides in the membrane. This chain is Protein psiP (psiP), found in Dictyostelium discoideum (Social amoeba).